Here is a 140-residue protein sequence, read N- to C-terminus: Ribosome maturation factor RimP (140 aa).

This sequence belongs to the RimP family.

Its subcellular location is the cytoplasm. Its function is as follows. Required for maturation of 30S ribosomal subunits. In Campylobacter lari (strain RM2100 / D67 / ATCC BAA-1060), this protein is Ribosome maturation factor RimP.